Consider the following 178-residue polypeptide: Large ribosomal subunit protein uL6 (178 aa).

It belongs to the universal ribosomal protein uL6 family. Part of the 50S ribosomal subunit.

Its function is as follows. This protein binds to the 23S rRNA, and is important in its secondary structure. It is located near the subunit interface in the base of the L7/L12 stalk, and near the tRNA binding site of the peptidyltransferase center. This Sulfurovum sp. (strain NBC37-1) protein is Large ribosomal subunit protein uL6.